The chain runs to 364 residues: Cobalt-precorrin-5B C(1)-methyltransferase (364 aa).

Belongs to the CbiD family.

It catalyses the reaction Co-precorrin-5B + S-adenosyl-L-methionine = Co-precorrin-6A + S-adenosyl-L-homocysteine. It functions in the pathway cofactor biosynthesis; adenosylcobalamin biosynthesis; cob(II)yrinate a,c-diamide from sirohydrochlorin (anaerobic route): step 6/10. Its function is as follows. Catalyzes the methylation of C-1 in cobalt-precorrin-5B to form cobalt-precorrin-6A. The protein is Cobalt-precorrin-5B C(1)-methyltransferase of Pseudomonas entomophila (strain L48).